The following is a 57-amino-acid chain: Large ribosomal subunit protein bL32c (57 aa).

It belongs to the bacterial ribosomal protein bL32 family.

The protein resides in the plastid. Its subcellular location is the chloroplast. This chain is Large ribosomal subunit protein bL32c, found in Liriodendron tulipifera (Tuliptree).